A 220-amino-acid polypeptide reads, in one-letter code: NAD(P)H-hydrate epimerase (220 aa).

In terms of domain architecture, YjeF N-terminal spans 6–203 (ARHLTTLATG…SFDLPEALFH (198 aa)). 53-57 (HNGGV) contributes to the (6S)-NADPHX binding site. K(+) contacts are provided by Asn-54 and Asp-116. (6S)-NADPHX contacts are provided by residues 120–126 (GMRLEGP) and Asp-149. Thr-152 is a binding site for K(+).

The protein belongs to the NnrE/AIBP family. Requires K(+) as cofactor.

The catalysed reaction is (6R)-NADHX = (6S)-NADHX. It catalyses the reaction (6R)-NADPHX = (6S)-NADPHX. Catalyzes the epimerization of the S- and R-forms of NAD(P)HX, a damaged form of NAD(P)H that is a result of enzymatic or heat-dependent hydration. This is a prerequisite for the S-specific NAD(P)H-hydrate dehydratase to allow the repair of both epimers of NAD(P)HX. This Truepera radiovictrix (strain DSM 17093 / CIP 108686 / LMG 22925 / RQ-24) protein is NAD(P)H-hydrate epimerase.